A 279-amino-acid polypeptide reads, in one-letter code: Large ribosomal subunit protein uL3 (279 aa).

Gln-151 carries the N5-methylglutamine modification.

It belongs to the universal ribosomal protein uL3 family. Part of the 50S ribosomal subunit. Forms a cluster with proteins L14 and L19. Post-translationally, methylated by PrmB.

One of the primary rRNA binding proteins, it binds directly near the 3'-end of the 23S rRNA, where it nucleates assembly of the 50S subunit. This is Large ribosomal subunit protein uL3 from Dinoroseobacter shibae (strain DSM 16493 / NCIMB 14021 / DFL 12).